The following is a 219-amino-acid chain: Elongation factor Ts (219 aa).

The tract at residues Thr-82 to Val-85 is involved in Mg(2+) ion dislocation from EF-Tu.

Belongs to the EF-Ts family.

The protein localises to the cytoplasm. Functionally, associates with the EF-Tu.GDP complex and induces the exchange of GDP to GTP. It remains bound to the aminoacyl-tRNA.EF-Tu.GTP complex up to the GTP hydrolysis stage on the ribosome. In Anaeromyxobacter sp. (strain K), this protein is Elongation factor Ts.